The chain runs to 71 residues: Conotoxin Bu23 (71 aa).

Positions 1-21 (MGMRMMVTVFLLGVLATTVVS) are cleaved as a signal peptide. Residues 22 to 37 (LRSNRASDGRRGIVNK) constitute a propeptide that is removed on maturation. N70 carries the asparagine amide modification.

This sequence belongs to the conotoxin A superfamily. Contains 3 disulfide bonds. They are not indicated here, since framework IV presents two different connectivities (I-V, II-III, IV-VI and I-III, II-V, IV-VI). In terms of tissue distribution, expressed by the venom duct.

The protein resides in the secreted. The protein is Conotoxin Bu23 of Conus bullatus (Bubble cone).